The following is a 379-amino-acid chain: MSKTRMEKLKTLKTIAETLNQGHDIKATLDEVLKELLSLTNLQSGWIFLIEEDGSYTLAADAYLPPALSRKEKVLMCEGECYCLTKFNNGGLRKAANIMNCKRIESAENLHCFDTEGITHHATVPLEDGDRRFGLLNVAAAGKTMFDEEELHLLESVAFQIGTAIQRMRLSEYQQKNALLMERNRLAQELHDSVNQMLFSVSLTAKAAKTLTKDENLQQMIDFIQNLSQDALAEMKALIWQLRPGGLEKGLAEAIKSYGALIGLKIIFTQKGCPVLTDEQEHMLWRVVQEALNNCKKHAGTDTAYVSLTASLCHAELDIIDHGAGFRYEAHAGLPSLGIKGMKERAEKAGAKFWIESALGTGTKLSIRLPLKSRKGGAV.

The region spanning 185–373 (RLAQELHDSV…KLSIRLPLKS (189 aa)) is the Histidine kinase domain. Phosphohistidine; by autocatalysis is present on His-191.

The enzyme catalyses ATP + protein L-histidine = ADP + protein N-phospho-L-histidine.. In terms of biological role, member of the two-component regulatory system YhcY/YhcZ. Probably activates YhcZ by phosphorylation. The chain is Sensor histidine kinase YhcY (yhcY) from Bacillus subtilis (strain 168).